The chain runs to 250 residues: UPF0524 protein C3orf70 (250 aa).

Residues 201–250 form a disordered region; sequence ESCDEDTEEGAELSSEEDYSPESSWEPDECTLLSPSQSDLEVIETIETTV. A compositionally biased stretch (acidic residues) spans 202–229; the sequence is SCDEDTEEGAELSSEEDYSPESSWEPDE.

It belongs to the UPF0524 family.

Its function is as follows. May play a role in neuronal and neurobehavioral development. The polypeptide is UPF0524 protein C3orf70 (C3orf70) (Homo sapiens (Human)).